The sequence spans 389 residues: ATP phosphoribosyltransferase regulatory subunit (389 aa).

It belongs to the class-II aminoacyl-tRNA synthetase family. HisZ subfamily. As to quaternary structure, heteromultimer composed of HisG and HisZ subunits.

The protein localises to the cytoplasm. Its pathway is amino-acid biosynthesis; L-histidine biosynthesis; L-histidine from 5-phospho-alpha-D-ribose 1-diphosphate: step 1/9. Functionally, required for the first step of histidine biosynthesis. May allow the feedback regulation of ATP phosphoribosyltransferase activity by histidine. This chain is ATP phosphoribosyltransferase regulatory subunit, found in Moorella thermoacetica (strain ATCC 39073 / JCM 9320).